A 367-amino-acid chain; its full sequence is Phosphoribosylaminoimidazole-succinocarboxamide synthase (367 aa).

This sequence belongs to the SAICAR synthetase family.

The enzyme catalyses 5-amino-1-(5-phospho-D-ribosyl)imidazole-4-carboxylate + L-aspartate + ATP = (2S)-2-[5-amino-1-(5-phospho-beta-D-ribosyl)imidazole-4-carboxamido]succinate + ADP + phosphate + 2 H(+). The protein operates within purine metabolism; IMP biosynthesis via de novo pathway; 5-amino-1-(5-phospho-D-ribosyl)imidazole-4-carboxamide from 5-amino-1-(5-phospho-D-ribosyl)imidazole-4-carboxylate: step 1/2. The polypeptide is Phosphoribosylaminoimidazole-succinocarboxamide synthase (Shewanella baltica (strain OS195)).